Here is a 750-residue protein sequence, read N- to C-terminus: uncharacterized protein (750 aa).

N-linked (GlcNAc...) asparagine glycosylation is found at N61, N84, N115, N154, N176, N197, N207, N228, N241, N267, N293, N299, N312, N335, N351, N373, N389, and N519. Phosphoserine occurs at positions 675 and 678. Residue K697 forms a Glycyl lysine isopeptide (Lys-Gly) (interchain with G-Cter in ubiquitin) linkage. Composition is skewed to polar residues over residues 703–726 (EITAIDNSSSANNTDVTGSTSNRT) and 736–750 (KDSNGPVNNNAHLVA). The segment at 703–750 (EITAIDNSSSANNTDVTGSTSNRTELSHPDVTPKDSNGPVNNNAHLVA) is disordered. Residues N709, N714, and N724 are each glycosylated (N-linked (GlcNAc...) asparagine).

Post-translationally, N-glycosylated.

The protein resides in the mitochondrion. This is an uncharacterized protein from Saccharomyces cerevisiae (strain ATCC 204508 / S288c) (Baker's yeast).